The following is a 123-amino-acid chain: Small ribosomal subunit protein uS12c (123 aa).

This sequence belongs to the universal ribosomal protein uS12 family. As to quaternary structure, part of the 30S ribosomal subunit.

It localises to the plastid. Its subcellular location is the chloroplast. Functionally, with S4 and S5 plays an important role in translational accuracy. Located at the interface of the 30S and 50S subunits. The protein is Small ribosomal subunit protein uS12c (rps12) of Chlorella vulgaris (Green alga).